The sequence spans 531 residues: Non-muscle caldesmon (531 aa).

Positions 20–200 are myosin and calmodulin-binding; sequence AYQRNDDDEE…LKGGNLGENQ (181 aa). The segment at 21 to 379 is disordered; the sequence is YQRNDDDEEE…KKPFKCFTPK (359 aa). Positions 41-50 are enriched in basic and acidic residues; it reads QERLRQKQEE. Positions 54 to 68 are enriched in polar residues; that stretch reads GQVTDQVEAHVQNSA. Basic and acidic residues predominate over residues 93-116; it reads RLARREERRQKRLQEALERQKEFD. Residues 120-133 show a composition bias toward polar residues; the sequence is TDGSLSVPSRRMQN. Ser123 is subject to Phosphoserine. Residues 143–156 are compositionally biased toward basic and acidic residues; the sequence is GEEKGESRSGRYEM. The segment covering 162–172 has biased composition (polar residues); sequence VITSYQKNSYQ. Residues 200-227 show a composition bias toward basic and acidic residues; that stretch reads QIKDEKIKKDKEPKEEVKNFLDRKKGFT. Ser249 bears the Phosphoserine; by CDK1 mark. 2 stretches are compositionally biased toward basic and acidic residues: residues 271-297 and 305-372; these read AGKR…KQKQ and EELK…DKKP. Positions 303–360 are tropomyosin-binding; sequence ELEELKKKREERRKVLEEEEQRRKQEEADRKAREEEEKRRLKEEIERRRAEAAEKRQK. The residue at position 382 (Ser382) is a Phosphoserine. Residue Lys384 forms a Glycyl lysine isopeptide (Lys-Gly) (interchain with G-Cter in SUMO2) linkage. Residues 392–424 form a strong actin-binding region; the sequence is LNKSVQKSGVKSTHQAAVVSKIDSRLEQYTNAI. Position 395 is a phosphoserine (Ser395). Residues 402-412 form a tropomyosin-binding region; it reads KSTHQAAVVSK. Positions 454–460 are calmodulin-binding; sequence WEKGSVF. Residues 458–531 form a disordered region; the sequence is SVFSSPSASG…VDKVTSPTKV (74 aa). The span at 459–471 shows a compositional bias: polar residues; sequence VFSSPSASGTPNK. Ser462 is subject to Phosphoserine; by CDK1. The residue at position 468 (Thr468) is a Phosphothreonine; by CDK1. Ser491 and Ser497 each carry phosphoserine; by CDK1. The segment covering 503-522 has biased composition (basic and acidic residues); that stretch reads SDLRPGDVSGKRNLWEKQSV. A weak actin-binding region spans residues 506–531; that stretch reads RPGDVSGKRNLWEKQSVDKVTSPTKV. A Phosphoserine; by CDK1 modification is found at Ser527.

It belongs to the caldesmon family. Post-translationally, in non-muscle cells, phosphorylation by CDK1 during mitosis causes caldesmon to dissociate from microfilaments. Phosphorylation reduces caldesmon binding to actin, myosin, and calmodulin as well as its inhibition of actomyosin ATPase activity. Phosphorylation also occurs in both quiescent and dividing smooth muscle cells with similar effects on the interaction with actin and calmodulin and on microfilaments reorganization. CDK1-mediated phosphorylation promotes Schwann cell migration during peripheral nerve regeneration. In terms of tissue distribution, high-molecular-weight caldesmon (h-caldesmon) is predominantly expressed in smooth muscles, whereas low-molecular-weight caldesmon (l-caldesmon) is widely distributed in non-muscle tissues and cells. Not expressed in skeletal muscle or heart.

It localises to the cytoplasm. The protein localises to the cytoskeleton. The protein resides in the myofibril. It is found in the stress fiber. In terms of biological role, actin- and myosin-binding protein implicated in the regulation of actomyosin interactions in smooth muscle and nonmuscle cells (could act as a bridge between myosin and actin filaments). Stimulates actin binding of tropomyosin which increases the stabilization of actin filament structure. In muscle tissues, inhibits the actomyosin ATPase by binding to F-actin. This inhibition is attenuated by calcium-calmodulin and is potentiated by tropomyosin. Interacts with actin, myosin, two molecules of tropomyosin and with calmodulin. Also plays an essential role during cellular mitosis and receptor capping. Involved in Schwann cell migration during peripheral nerve regeneration. This chain is Non-muscle caldesmon (Cald1), found in Rattus norvegicus (Rat).